The following is a 386-amino-acid chain: N-acetylneuraminate epimerase (386 aa).

An N-terminal signal peptide occupies residues 1–29 (MGMQMKNFKKMMTLMALCFSVAITTSGYA). Kelch repeat units follow at residues 51–95 (VIYV…VFLN), 97–149 (ELYV…VKLN), 151–186 (TMVLITGGVNEHIFDKYFIDIAAAAADESEKNKVIY), 187–232 (NYFN…VMGN), 235–284 (LMLI…LAGA), 306–355 (QNYT…SYGD), and 357–386 (VFLIGGENAKGKPVSSVTSFTMRDGNLLIK). Glutamate 241 (proton acceptor) is an active-site residue.

Belongs to the NanM family. As to quaternary structure, homodimer.

Its subcellular location is the periplasm. It catalyses the reaction N-acetyl-alpha-neuraminate = N-acetyl-beta-neuraminate. In terms of biological role, converts alpha-N-acetylneuranimic acid (Neu5Ac) to the beta-anomer, accelerating the equilibrium between the alpha- and beta-anomers. Probably facilitates sialidase-negative bacteria to compete successfully for limited amounts of extracellular Neu5Ac, which is likely taken up in the beta-anomer. In addition, the rapid removal of sialic acid from solution might be advantageous to the bacterium to damp down host responses. The chain is N-acetylneuraminate epimerase from Salmonella typhimurium (strain LT2 / SGSC1412 / ATCC 700720).